Consider the following 284-residue polypeptide: Large ribosomal subunit protein uL2 (284 aa).

2 disordered regions span residues 28–50 and 232–284; these read ELEG…FKKS and RGTA…DRRK. Residues 36-46 are compositionally biased toward basic residues; the sequence is RSVRPNKKLSF. Residues 240–250 are compositionally biased toward basic and acidic residues; the sequence is DHPHGGGEGRH. A compositionally biased stretch (basic residues) spans 264–284; that stretch reads KGLKTRDKRKSNKWIVKDRRK.

The protein belongs to the universal ribosomal protein uL2 family. In terms of assembly, part of the 50S ribosomal subunit. Forms a bridge to the 30S subunit in the 70S ribosome.

In terms of biological role, one of the primary rRNA binding proteins. Required for association of the 30S and 50S subunits to form the 70S ribosome, for tRNA binding and peptide bond formation. It has been suggested to have peptidyltransferase activity; this is somewhat controversial. Makes several contacts with the 16S rRNA in the 70S ribosome. This chain is Large ribosomal subunit protein uL2, found in Chlamydia muridarum (strain MoPn / Nigg).